A 199-amino-acid chain; its full sequence is MQFEVKDLINKIKKDGLEEAERVSNDIILKAKREAEEIVARAEESARALKAKSEKEINDYKSHALEASRQAIRDLIIGVEKNLKSLFENTLKDNVVEVFSDNNFLAELIIKITDSWAKEEKLVVQLNESDFSSLEQILRLKLGNKLAQGIEIKPFKGISKGFKIQKKNIGLQYDFSAETVADILFDYLNPRFKEIIKVV.

It belongs to the V-ATPase E subunit family.

Functionally, produces ATP from ADP in the presence of a proton gradient across the membrane. In Borreliella afzelii (strain PKo) (Borrelia afzelii), this protein is V-type ATP synthase subunit E.